A 462-amino-acid polypeptide reads, in one-letter code: Chromosomal replication initiator protein DnaA (462 aa).

Residues 1–84 (MAVSLWQQCI…RFDIGSRPSA (84 aa)) are domain I, interacts with DnaA modulators. A domain II region spans residues 84 to 125 (AKKPSVPAPIAPTRVANTQTKATVGTTFNVQAEPMANANHRS). The interval 126-342 (NINPSYQFDN…GALNRVIANA (217 aa)) is domain III, AAA+ region. Gly-170, Gly-172, Lys-173, and Thr-174 together coordinate ATP. The segment at 343–462 (NFTGRPITID…YANLIRTLSS (120 aa)) is domain IV, binds dsDNA.

Belongs to the DnaA family. As to quaternary structure, oligomerizes as a right-handed, spiral filament on DNA at oriC.

It is found in the cytoplasm. Its function is as follows. Plays an essential role in the initiation and regulation of chromosomal replication. ATP-DnaA binds to the origin of replication (oriC) to initiate formation of the DNA replication initiation complex once per cell cycle. Binds the DnaA box (a 9 base pair repeat at the origin) and separates the double-stranded (ds)DNA. Forms a right-handed helical filament on oriC DNA; dsDNA binds to the exterior of the filament while single-stranded (ss)DNA is stabiized in the filament's interior. The ATP-DnaA-oriC complex binds and stabilizes one strand of the AT-rich DNA unwinding element (DUE), permitting loading of DNA polymerase. After initiation quickly degrades to an ADP-DnaA complex that is not apt for DNA replication. Binds acidic phospholipids. The sequence is that of Chromosomal replication initiator protein DnaA from Shewanella baltica (strain OS195).